A 140-amino-acid chain; its full sequence is Class I hydrophobin 1 (140 aa).

Positions 1 to 18 (MKFAAVVVLAAAAAAVSA) are cleaved as a signal peptide. The segment at 22–60 (AQRMARGLPPKAPIRRHGTPADTEKRSHPSSTGGGQCNT) is disordered. 4 cysteine pairs are disulfide-bonded: C58-C119, C65-C113, C66-C99, and C120-C133.

It belongs to the fungal hydrophobin family. As to quaternary structure, self-assembles to form functional amyloid fibrils called rodlets. Self-assembly into fibrillar rodlets occurs spontaneously at hydrophobic:hydrophilic interfaces and the rodlets further associate laterally to form amphipathic monolayers.

Its subcellular location is the secreted. The protein localises to the cell wall. Its function is as follows. Aerial growth, conidiation, and dispersal of filamentous fungi in the environment rely upon a capability of their secreting small amphipathic proteins called hydrophobins (HPBs) with low sequence identity. Class I can self-assemble into an outermost layer of rodlet bundles on aerial cell surfaces, conferring cellular hydrophobicity that supports fungal growth, development and dispersal; whereas Class II form highly ordered films at water-air interfaces through intermolecular interactions but contribute nothing to the rodlet structure. The sequence is that of Class I hydrophobin 1 from Pisolithus tinctorius (Dead man's foot).